The primary structure comprises 570 residues: Hydroxylamine reductase (570 aa).

[4Fe-4S] cluster is bound by residues C5, C8, C17, and C23. Hybrid [4Fe-2O-2S] cluster-binding residues include H266, E290, C334, C425, C453, C478, E513, and K515. Position 425 is a cysteine persulfide (C425).

It belongs to the HCP family. [4Fe-4S] cluster is required as a cofactor. It depends on hybrid [4Fe-2O-2S] cluster as a cofactor.

Its subcellular location is the cytoplasm. It catalyses the reaction A + NH4(+) + H2O = hydroxylamine + AH2 + H(+). Functionally, catalyzes the reduction of hydroxylamine to form NH(3) and H(2)O. This chain is Hydroxylamine reductase, found in Clostridium botulinum (strain ATCC 19397 / Type A).